The sequence spans 245 residues: 3-deoxy-manno-octulosonate cytidylyltransferase (245 aa).

Belongs to the KdsB family.

The protein resides in the cytoplasm. The catalysed reaction is 3-deoxy-alpha-D-manno-oct-2-ulosonate + CTP = CMP-3-deoxy-beta-D-manno-octulosonate + diphosphate. Its pathway is nucleotide-sugar biosynthesis; CMP-3-deoxy-D-manno-octulosonate biosynthesis; CMP-3-deoxy-D-manno-octulosonate from 3-deoxy-D-manno-octulosonate and CTP: step 1/1. It functions in the pathway bacterial outer membrane biogenesis; lipopolysaccharide biosynthesis. In terms of biological role, activates KDO (a required 8-carbon sugar) for incorporation into bacterial lipopolysaccharide in Gram-negative bacteria. The sequence is that of 3-deoxy-manno-octulosonate cytidylyltransferase from Rhodopseudomonas palustris (strain HaA2).